The primary structure comprises 158 residues: Ethylene-responsive transcription factor ERF120 (158 aa).

A DNA-binding region (AP2/ERF) is located at residues 86–147; that stretch reads KHKGVRKKPS…SARRGTKNGE (62 aa). The disordered stretch occupies residues 134–158; the sequence is VGRRSARRGTKNGEEASTKKTTEKN. Positions 144–158 are enriched in basic and acidic residues; that stretch reads KNGEEASTKKTTEKN.

It belongs to the AP2/ERF transcription factor family. ERF subfamily.

The protein resides in the nucleus. Its function is as follows. Probably acts as a transcriptional activator. Binds to the GCC-box pathogenesis-related promoter element. May be involved in the regulation of gene expression by stress factors and by components of stress signal transduction pathways. The chain is Ethylene-responsive transcription factor ERF120 (ERF120) from Arabidopsis thaliana (Mouse-ear cress).